We begin with the raw amino-acid sequence, 602 residues long: Elongation factor 4 (602 aa).

Residues 7–188 (ENIRNFSIIA…SIIRLVPPPK (182 aa)) form the tr-type G domain. GTP is bound by residues 19–24 (DHGKST) and 135–138 (NKID).

This sequence belongs to the TRAFAC class translation factor GTPase superfamily. Classic translation factor GTPase family. LepA subfamily.

The protein localises to the cell inner membrane. It catalyses the reaction GTP + H2O = GDP + phosphate + H(+). In terms of biological role, required for accurate and efficient protein synthesis under certain stress conditions. May act as a fidelity factor of the translation reaction, by catalyzing a one-codon backward translocation of tRNAs on improperly translocated ribosomes. Back-translocation proceeds from a post-translocation (POST) complex to a pre-translocation (PRE) complex, thus giving elongation factor G a second chance to translocate the tRNAs correctly. Binds to ribosomes in a GTP-dependent manner. This chain is Elongation factor 4, found in Chlamydia muridarum (strain MoPn / Nigg).